A 460-amino-acid chain; its full sequence is Cation efflux system protein CusC (460 aa).

The first 17 residues, Met-1–Gly-17, serve as a signal peptide directing secretion. A lipid anchor (N-palmitoyl cysteine) is attached at Cys-18. Cys-18 carries the S-diacylglycerol cysteine lipid modification.

This sequence belongs to the outer membrane factor (OMF) (TC 1.B.17) family. In terms of assembly, homotrimer. Component of the cus efflux system composed of CusA, CusB, CusC and CusF.

The protein localises to the cell outer membrane. In terms of biological role, forms pores that allow passive diffusion of cations across the outer membrane. Part of a cation efflux system that mediates resistance to copper and silver. In Escherichia coli O6:H1 (strain CFT073 / ATCC 700928 / UPEC), this protein is Cation efflux system protein CusC (cusC).